The sequence spans 86 residues: Large ribosomal subunit protein bL27 (86 aa).

Positions 1 to 10 (MAQKKGGGST) are enriched in gly residues. A disordered region spans residues 1–20 (MAQKKGGGSTRNGRDSESKR).

Belongs to the bacterial ribosomal protein bL27 family.

This Bordetella avium (strain 197N) protein is Large ribosomal subunit protein bL27.